The following is a 180-amino-acid chain: GTP cyclohydrolase 1 (180 aa).

Zn(2+)-binding residues include cysteine 71, histidine 74, and cysteine 142.

This sequence belongs to the GTP cyclohydrolase I family. Toroid-shaped homodecamer, composed of two pentamers of five dimers.

The catalysed reaction is GTP + H2O = 7,8-dihydroneopterin 3'-triphosphate + formate + H(+). It participates in cofactor biosynthesis; 7,8-dihydroneopterin triphosphate biosynthesis; 7,8-dihydroneopterin triphosphate from GTP: step 1/1. This is GTP cyclohydrolase 1 from Helicobacter pylori (strain HPAG1).